A 151-amino-acid chain; its full sequence is Small ribosomal subunit protein uS9 (151 aa).

The segment covering 1–19 has biased composition (low complexity); sequence MTETTPAPQTPAAPAGPAQ. Disordered stretches follow at residues 1 to 20 and 121 to 151; these read MTET…PAQS and KAGF…YSKR. Residues 127–136 show a composition bias toward basic and acidic residues; it reads RDPRATERKK. Basic residues predominate over residues 137–151; it reads YGLKKARKAPQYSKR.

This sequence belongs to the universal ribosomal protein uS9 family.

This chain is Small ribosomal subunit protein uS9 (rpsI), found in Mycobacterium bovis (strain ATCC BAA-935 / AF2122/97).